Consider the following 206-residue polypeptide: Probable glutathione S-transferase 9 (206 aa).

Residues 2–79 (VSYKLIYFQS…YLSKQFGISG (78 aa)) enclose the GST N-terminal domain. Glutathione contacts are provided by residues Tyr-8, Trp-39, Lys-43, 49–51 (GQV), and 63–64 (QS). In terms of domain architecture, GST C-terminal spans 81-206 (SSWEEAQVDA…WIEKRPVTSR (126 aa)).

This sequence belongs to the GST superfamily. Sigma family.

The catalysed reaction is RX + glutathione = an S-substituted glutathione + a halide anion + H(+). Functionally, conjugation of reduced glutathione to a wide number of exogenous and endogenous hydrophobic electrophiles. In Caenorhabditis elegans, this protein is Probable glutathione S-transferase 9 (gst-9).